A 97-amino-acid polypeptide reads, in one-letter code: Co-chaperonin GroES (97 aa).

The protein belongs to the GroES chaperonin family. In terms of assembly, heptamer of 7 subunits arranged in a ring. Interacts with the chaperonin GroEL.

The protein resides in the cytoplasm. In terms of biological role, together with the chaperonin GroEL, plays an essential role in assisting protein folding. The GroEL-GroES system forms a nano-cage that allows encapsulation of the non-native substrate proteins and provides a physical environment optimized to promote and accelerate protein folding. GroES binds to the apical surface of the GroEL ring, thereby capping the opening of the GroEL channel. The polypeptide is Co-chaperonin GroES (Buchnera aphidicola subsp. Thelaxes suberi).